Reading from the N-terminus, the 657-residue chain is Iron-sulfur cluster biogenesis chaperone, mitochondrial (657 aa).

Belongs to the heat shock protein 70 family. Interacts with the Fe/S cluster assembly proteins ISU1, MGE1, GRX5 and JAC1.

It localises to the mitochondrion matrix. The catalysed reaction is ATP + H2O = ADP + phosphate + H(+). Its function is as follows. Required for the assembly of iron-sulfur (Fe/S) clusters in mitochondria. Assisted by the DnaJ-like co-chaperone JAC1 and the nucleotide exchange factor MGE1, it mediates ATP-dependent Fe-S cluster transfer from the scaffold proteins ISU1/ISU2 to GRX5. The chain is Iron-sulfur cluster biogenesis chaperone, mitochondrial from Saccharomyces cerevisiae (strain ATCC 204508 / S288c) (Baker's yeast).